The following is a 150-amino-acid chain: uncharacterized protein (150 aa).

The next 3 membrane-spanning stretches (helical) occupy residues 50–70 (VVSVILTLRGYVQLGYMVIHL), 80–100 (LYITITHYTIYIVNIVIQLWL), and 127–147 (KVVIRFYFHFYFFFSFLFFIE).

The protein localises to the membrane. This is an uncharacterized protein from Schizosaccharomyces pombe (strain 972 / ATCC 24843) (Fission yeast).